A 65-amino-acid polypeptide reads, in one-letter code: MKMSILFLFALIASLACLQLTFAAPAASPLANPGASPEAAPLADPLADPFMPIIGRLMSGSLGKK.

The first 23 residues, 1-23, serve as a signal peptide directing secretion; it reads MKMSILFLFALIASLACLQLTFA. AXPX repeat units follow at residues 23 to 26, 27 to 30, 31 to 34, 35 to 38, 39 to 42, 43 to 46, and 47 to 50; these read AAPA, ASPL, ANPG, ASPE, AAPL, ADPL, and ADPF. Residues 24–49 constitute a propeptide that is removed on maturation; the sequence is APAASPLANPGASPEAAPLADPLADP. Leucine amide is present on Leu-62.

In terms of tissue distribution, expressed by the venom gland.

Its subcellular location is the secreted. Antimicrobial peptide. Shows activity against both Gram-positive (S.aureus MIC=1.0-3.75 ug/ml) and -negative (E.coli MIC=7.5-15 ug/ml) bacteria, as well against fungi (C.albicans MIC=30 ug/ml). Also promotes important mast cell degranulation. Shows little hemolytic activity on rabbit and human erythrocytes. Its mast cell degranulation activity may be related to the activation of G-protein coupled receptors in mast cells as well as interaction with other proteins located in cell endosomal membranes in the mast cells. This is VESP-VB1 from Vespa bicolor (Black shield wasp).